We begin with the raw amino-acid sequence, 763 residues long: Phosphoglycerol transferase I (763 aa).

The next 4 helical transmembrane spans lie at 4-19 (LLSFALFLASVLIYAW), 26-48 (WWFAATLTVLGLFVVLNITLFAS), 76-98 (YILPGIGIVLGLTAVFGALGWIL), and 105-127 (PHHFGYSLLALLLALGSVDASPA).

It belongs to the OpgB family.

Its subcellular location is the cell inner membrane. The enzyme catalyses a phosphatidylglycerol + a membrane-derived-oligosaccharide D-glucose = a 1,2-diacyl-sn-glycerol + a membrane-derived-oligosaccharide 6-(glycerophospho)-D-glucose.. The protein operates within glycan metabolism; osmoregulated periplasmic glucan (OPG) biosynthesis. Transfers a phosphoglycerol residue from phosphatidylglycerol to the membrane-bound nascent glucan backbones. This Escherichia coli O157:H7 protein is Phosphoglycerol transferase I.